The sequence spans 162 residues: Succinate dehydrogenase assembly factor 2, mitochondrial (162 aa).

Residues 1-35 constitute a mitochondrion transit peptide; it reads MHNMFPALTKTLSLQGYKIINSQTGSAAWSCGRRW.

This sequence belongs to the SDHAF2 family. In terms of assembly, interacts with SDH1 within the SDH catalytic dimer.

Its subcellular location is the mitochondrion matrix. Plays an essential role in the assembly of succinate dehydrogenase (SDH), an enzyme complex (also referred to as respiratory complex II) that is a component of both the tricarboxylic acid (TCA) cycle and the mitochondrial electron transport chain, and which couples the oxidation of succinate to fumarate with the reduction of ubiquinone (coenzyme Q) to ubiquinol. Required for flavinylation (covalent attachment of FAD) of the flavoprotein subunit SDH1 of the SDH catalytic dimer. It is unclear whether it participates in the chemistry of FAD attachment (enzymatic function) or acts as a chaperone that maintains SDH1 in a conformation that is susceptible to autocatalytic FAD attachment. Does not bind FAD or FADH(2) in vitro. Involved in sporulation. Required for the full activation of the early meiotic inducer IME1. The chain is Succinate dehydrogenase assembly factor 2, mitochondrial from Saccharomyces cerevisiae (strain ATCC 204508 / S288c) (Baker's yeast).